A 282-amino-acid chain; its full sequence is Pantothenate synthetase (282 aa).

30–37 (MGYLHEGH) contributes to the ATP binding site. The Proton donor role is filled by H37. Residue Q61 coordinates (R)-pantoate. Residue Q61 coordinates beta-alanine. 147–150 (GMKD) is an ATP binding site. Position 153 (Q153) interacts with (R)-pantoate. ATP contacts are provided by residues V176 and 184 to 187 (KSSR).

The protein belongs to the pantothenate synthetase family. In terms of assembly, homodimer.

It localises to the cytoplasm. It carries out the reaction (R)-pantoate + beta-alanine + ATP = (R)-pantothenate + AMP + diphosphate + H(+). Its pathway is cofactor biosynthesis; (R)-pantothenate biosynthesis; (R)-pantothenate from (R)-pantoate and beta-alanine: step 1/1. Its function is as follows. Catalyzes the condensation of pantoate with beta-alanine in an ATP-dependent reaction via a pantoyl-adenylate intermediate. The chain is Pantothenate synthetase from Bacillus cytotoxicus (strain DSM 22905 / CIP 110041 / 391-98 / NVH 391-98).